Reading from the N-terminus, the 343-residue chain is Putative outer membrane protein y4fJ (343 aa).

Positions 1-17 are cleaved as a signal peptide; the sequence is MRMNFSTVLLGSSVALA.

This sequence belongs to the alphaproteobacteria porin family.

It is found in the cell outer membrane. May act as an outer membrane pore. This Sinorhizobium fredii (strain NBRC 101917 / NGR234) protein is Putative outer membrane protein y4fJ.